The primary structure comprises 179 residues: Large ribosomal subunit protein bL9 (179 aa).

Residues 156-179 form a disordered region; it reads PEGAPVPVAEEPAAEAEQAEVAAE. Low complexity predominate over residues 157 to 166; the sequence is EGAPVPVAEE. Positions 167 to 179 are enriched in acidic residues; the sequence is PAAEAEQAEVAAE.

The protein belongs to the bacterial ribosomal protein bL9 family.

Binds to the 23S rRNA. The sequence is that of Large ribosomal subunit protein bL9 from Porphyromonas gingivalis (strain ATCC 33277 / DSM 20709 / CIP 103683 / JCM 12257 / NCTC 11834 / 2561).